A 334-amino-acid polypeptide reads, in one-letter code: Cathepsin J (334 aa).

An N-terminal signal peptide occupies residues 1–17; the sequence is MTPTVLLLILCFGVASG. Residues 18–113 constitute a propeptide, activation peptide; the sequence is AQAHDPKLDA…PHAQNHVSIG (96 aa). Residue Asn-72 is glycosylated (N-linked (GlcNAc...) asparagine). Disulfide bonds link Cys-135–Cys-178 and Cys-169–Cys-211. Cys-138 is an active-site residue. N-linked (GlcNAc...) asparagine glycans are attached at residues Asn-217, Asn-221, and Asn-268. A disulfide bridge connects residues Cys-269 and Cys-322. Active-site residues include His-276 and Asn-300.

This sequence belongs to the peptidase C1 family. In terms of tissue distribution, expressed specifically in placenta.

Its subcellular location is the lysosome. The protein is Cathepsin J (Ctsj) of Mus musculus (Mouse).